Here is a 465-residue protein sequence, read N- to C-terminus: UDP-N-acetylmuramate--L-alanine ligase (465 aa).

Gly112–Thr118 contributes to the ATP binding site.

The protein belongs to the MurCDEF family.

Its subcellular location is the cytoplasm. The catalysed reaction is UDP-N-acetyl-alpha-D-muramate + L-alanine + ATP = UDP-N-acetyl-alpha-D-muramoyl-L-alanine + ADP + phosphate + H(+). The protein operates within cell wall biogenesis; peptidoglycan biosynthesis. Its function is as follows. Cell wall formation. This is UDP-N-acetylmuramate--L-alanine ligase from Burkholderia pseudomallei (strain 1106a).